The chain runs to 621 residues: Glutathione-regulated potassium-efflux system protein KefC (621 aa).

The next 13 membrane-spanning stretches (helical) occupy residues 4–24, 26–46, 54–74, 90–110, 114–134, 149–169, 178–198, 218–237, 238–257, 270–290, 294–314, 326–346, and 359–379; these read HTLI…PIAV, LGLG…PWAL, AILH…GLEL, GALQ…LLGL, VAEL…MQAM, FAVL…IPLL, LMAF…VVVL, VFSA…LEEV, GLSM…SSEY, GLLL…GTLV, LRIV…LWLI, RWFA…FGAA, and ALTL…VLLT. In terms of domain architecture, RCK N-terminal spans 399–518; sequence QPRVIVAGFG…AGVEAPERET (120 aa). A disordered region spans residues 598-621; sequence GWQGTEEGRHTGDIADEPENKPSA.

It belongs to the monovalent cation:proton antiporter 2 (CPA2) transporter (TC 2.A.37) family. KefC subfamily. Homodimer. Interacts with the regulatory subunit KefF.

Its subcellular location is the cell inner membrane. In terms of biological role, pore-forming subunit of a potassium efflux system that confers protection against electrophiles. Catalyzes K(+)/H(+) antiport. The protein is Glutathione-regulated potassium-efflux system protein KefC of Klebsiella pneumoniae subsp. pneumoniae (strain ATCC 700721 / MGH 78578).